A 359-amino-acid polypeptide reads, in one-letter code: 3-dehydroquinate synthase (359 aa).

Residues 71–76 (DGEAYK), 105–109 (GVIGD), 129–130 (TT), Lys142, and Lys151 each bind NAD(+). The Zn(2+) site is built by Glu184, His247, and His264.

It belongs to the sugar phosphate cyclases superfamily. Dehydroquinate synthase family. It depends on Co(2+) as a cofactor. Zn(2+) is required as a cofactor. NAD(+) serves as cofactor.

It localises to the cytoplasm. It carries out the reaction 7-phospho-2-dehydro-3-deoxy-D-arabino-heptonate = 3-dehydroquinate + phosphate. It participates in metabolic intermediate biosynthesis; chorismate biosynthesis; chorismate from D-erythrose 4-phosphate and phosphoenolpyruvate: step 2/7. Catalyzes the conversion of 3-deoxy-D-arabino-heptulosonate 7-phosphate (DAHP) to dehydroquinate (DHQ). This chain is 3-dehydroquinate synthase, found in Burkholderia vietnamiensis (strain G4 / LMG 22486) (Burkholderia cepacia (strain R1808)).